A 1021-amino-acid polypeptide reads, in one-letter code: PDZ domain-containing protein 7 (1021 aa).

PDZ domains lie at 86–156 (AVRV…LTSS) and 210–279 (IVHL…EVLK). The span at 324-344 (SSSSVSSYASSAPCSSGSLPS) shows a compositional bias: low complexity. 3 disordered regions span residues 324 to 345 (SSSSVSSYASSAPCSSGSLPSD), 431 to 495 (ITRS…DSRS), and 724 to 814 (RRGA…HRPR). Residues 729 to 744 (APPPQPPPVAPRPPRP) show a composition bias toward pro residues. Residues 758-767 (QQNQSQTPAQ) show a composition bias toward polar residues. The segment covering 772–794 (SRSRSRSRSHSRGQGKSPGRRRS) has biased composition (basic residues). Residues 799–808 (PIATAATANG) are compositionally biased toward low complexity. One can recognise a PDZ 3 domain in the interval 858 to 930 (TITLSKMKQS…QRAVDTIRRA (73 aa)). The segment at 992–1021 (QLQQSLSSALKVPQSIPKLSPILKDPHDPS) is disordered.

In terms of assembly, homodimerizes (via PDZ2 domain). Component of USH2 complex, composed of ADGRV1, PDZD7, USH2A and WHRN. Interacts (via PDZ domains) with WHRN; the interaction is direct. Interacts with USH1G. Interacts with ADGRV1 (via the cytoplasmic region). Interacts with USH2A (via the cytoplasmic region). Interacts with MYO7A (via MyTH4-FERM domains). In terms of tissue distribution, isoform 1 is expressed in developing and adult cochlea but not retina. Isoform 2 is expressed in developing and adult cochlea and retina. Isoform 3 is expressed in adult cochlea and retina. Isoform 4 is expressed in retina and developing cochlea but not adult cochlea. Isoform 5 is expressed in adult cochlea but not in developing cochlea or retina.

Its subcellular location is the cell projection. The protein localises to the cilium. It is found in the nucleus. The protein resides in the stereocilium. Functionally, in cochlear developing hair cells, essential in organizing the USH2 complex at stereocilia ankle links. Blocks inhibition of adenylate cyclase activity mediated by ADGRV1. This Mus musculus (Mouse) protein is PDZ domain-containing protein 7.